The sequence spans 141 residues: Suppressor of RNA silencing (141 aa).

Short sequence motifs (bipartite nuclear localization signal) lie at residues 75–91 (RKRVETRNREIWKQIRR) and 111–128 (KKKFKEDREFGTPKRFLR). The segment at 94-117 (AENMSATAKKSHNSKTSKKKFKED) is disordered. The span at 102–113 (KKSHNSKTSKKK) shows a compositional bias: basic residues.

The protein resides in the host cytoplasm. It localises to the host nucleus. Functionally, weak suppressor of RNA-mediated gene silencing, also known as post-transcriptional gene silencing (PTGS), a mechanism of plant viral defense that performs sequence-specific inhibition of viral mRNAs expression. This could be used by the virus to infect efficiently the host the meristem cells. This is Suppressor of RNA silencing from Tobacco rattle virus (isolate PpK20) (TRV).